A 368-amino-acid polypeptide reads, in one-letter code: N-acetylneuraminate epimerase (368 aa).

The signal sequence occupies residues 1–19 (MNKTITALAIMMASFAANA). 7 Kelch repeats span residues 40–84 (TVYI…AFID), 86–137 (NLYV…FVHN), 139–173 (KAYV…KINA), 174–219 (HYFD…VNKG), 222–265 (TWLI…VAGG), 287–336 (ENYQ…PWNN), and 338–367 (LLII…VTVQ). The Proton acceptor role is filled by Glu-228.

As to quaternary structure, homodimer.

It localises to the periplasm. The enzyme catalyses N-acetyl-alpha-neuraminate = N-acetyl-beta-neuraminate. Its function is as follows. Converts alpha-N-acetylneuranimic acid (Neu5Ac) to the beta-anomer, accelerating the equilibrium between the alpha- and beta-anomers. Probably facilitates sialidase-negative bacteria to compete successfully for limited amounts of extracellular Neu5Ac, which is likely taken up in the beta-anomer. In addition, the rapid removal of sialic acid from solution might be advantageous to the bacterium to damp down host responses. Forms linear aceneuramate during interconversion of Neu5Ac anomers. This Escherichia coli (strain K12) protein is N-acetylneuraminate epimerase (nanM).